Reading from the N-terminus, the 472-residue chain is RNA pseudouridine synthase 6, chloroplastic (472 aa).

The transit peptide at 1–66 (MASPALTGGY…TDSQNQTTLS (66 aa)) directs the protein to the chloroplast. In terms of domain architecture, S4 RNA-binding spans 101–208 (VLVSEFISKQ…SPRCYEIDWK (108 aa)). Residue Asp-261 is part of the active site.

The protein belongs to the pseudouridine synthase RluA family.

It is found in the plastid. The protein resides in the chloroplast. It catalyses the reaction a uridine in RNA = a pseudouridine in RNA. This is RNA pseudouridine synthase 6, chloroplastic from Arabidopsis thaliana (Mouse-ear cress).